A 776-amino-acid polypeptide reads, in one-letter code: Protein translocase subunit SecA 2 (776 aa).

ATP is bound by residues Q80, 98-102 (GEGKT), and D486.

Belongs to the SecA family. Monomer and homodimer. Part of the essential Sec protein translocation apparatus which comprises SecA, SecYEG and auxiliary proteins SecDF. Other proteins may also be involved.

The protein localises to the cell membrane. Its subcellular location is the cytoplasm. The catalysed reaction is ATP + H2O + cellular proteinSide 1 = ADP + phosphate + cellular proteinSide 2.. Functionally, part of the Sec protein translocase complex. Interacts with the SecYEG preprotein conducting channel. Has a central role in coupling the hydrolysis of ATP to the transfer of proteins into and across the cell membrane, serving as an ATP-driven molecular motor driving the stepwise translocation of polypeptide chains across the membrane. The sequence is that of Protein translocase subunit SecA 2 from Listeria monocytogenes serovar 1/2a (strain ATCC BAA-679 / EGD-e).